Reading from the N-terminus, the 417-residue chain is UDP-N-acetylglucosamine 1-carboxyvinyltransferase (417 aa).

Residue 22–23 (KN) coordinates phosphoenolpyruvate. UDP-N-acetyl-alpha-D-glucosamine is bound at residue Arg92. Cys116 (proton donor) is an active-site residue. Cys116 carries the post-translational modification 2-(S-cysteinyl)pyruvic acid O-phosphothioketal. UDP-N-acetyl-alpha-D-glucosamine-binding positions include 161-164 (KVSV), Asp305, and Ile327.

It belongs to the EPSP synthase family. MurA subfamily.

The protein localises to the cytoplasm. It carries out the reaction phosphoenolpyruvate + UDP-N-acetyl-alpha-D-glucosamine = UDP-N-acetyl-3-O-(1-carboxyvinyl)-alpha-D-glucosamine + phosphate. It participates in cell wall biogenesis; peptidoglycan biosynthesis. Cell wall formation. Adds enolpyruvyl to UDP-N-acetylglucosamine. This chain is UDP-N-acetylglucosamine 1-carboxyvinyltransferase, found in Pelagibacter ubique (strain HTCC1062).